We begin with the raw amino-acid sequence, 162 residues long: Protein LTO1 (162 aa).

Residues 17 to 53 (GFLEGQNENIKQSFLEGKQYGLQVGFQRFTLLGQMEG) form a deca-GX3 motif; required for interaction with YAE1 and the CIA complex region.

It belongs to the LTO1 family. As to quaternary structure, forms a complex with YAE1; the complex bridges the interaction between the CIA complex and RLI1. Associates with the CIA complex (via its C-terminal tryptophan).

Its subcellular location is the nucleus. Its function is as follows. Essential for life in oxygen, but nonessential under anaerobic conditions. Required for biogenesis of the large ribosomal subunit and initiation of translation in oxygen. The complex LTO1:YAE1 functions as a target specific adapter that recruits apo-RLI1 to the cytosolic iron-sulfur protein assembly (CIA) complex machinery. This is Protein LTO1 from Saccharomyces cerevisiae (strain ATCC 204508 / S288c) (Baker's yeast).